The chain runs to 281 residues: UPF0294 protein VC_2238 (281 aa).

The protein belongs to the UPF0294 family.

The protein resides in the cytoplasm. This Vibrio cholerae serotype O1 (strain ATCC 39315 / El Tor Inaba N16961) protein is UPF0294 protein VC_2238.